We begin with the raw amino-acid sequence, 572 residues long: Proline--tRNA ligase (572 aa).

Belongs to the class-II aminoacyl-tRNA synthetase family. ProS type 1 subfamily. In terms of assembly, homodimer.

It is found in the cytoplasm. The enzyme catalyses tRNA(Pro) + L-proline + ATP = L-prolyl-tRNA(Pro) + AMP + diphosphate. In terms of biological role, catalyzes the attachment of proline to tRNA(Pro) in a two-step reaction: proline is first activated by ATP to form Pro-AMP and then transferred to the acceptor end of tRNA(Pro). As ProRS can inadvertently accommodate and process non-cognate amino acids such as alanine and cysteine, to avoid such errors it has two additional distinct editing activities against alanine. One activity is designated as 'pretransfer' editing and involves the tRNA(Pro)-independent hydrolysis of activated Ala-AMP. The other activity is designated 'posttransfer' editing and involves deacylation of mischarged Ala-tRNA(Pro). The misacylated Cys-tRNA(Pro) is not edited by ProRS. In Enterococcus faecalis (strain ATCC 700802 / V583), this protein is Proline--tRNA ligase.